Here is a 396-residue protein sequence, read N- to C-terminus: Tryptophan synthase beta chain (396 aa).

An N6-(pyridoxal phosphate)lysine modification is found at K88.

Belongs to the TrpB family. In terms of assembly, tetramer of two alpha and two beta chains. The cofactor is pyridoxal 5'-phosphate.

It catalyses the reaction (1S,2R)-1-C-(indol-3-yl)glycerol 3-phosphate + L-serine = D-glyceraldehyde 3-phosphate + L-tryptophan + H2O. It participates in amino-acid biosynthesis; L-tryptophan biosynthesis; L-tryptophan from chorismate: step 5/5. The beta subunit is responsible for the synthesis of L-tryptophan from indole and L-serine. The sequence is that of Tryptophan synthase beta chain from Shewanella baltica (strain OS195).